The following is a 919-amino-acid chain: Bifunctional uridylyltransferase/uridylyl-removing enzyme (919 aa).

Residues 1–373 form a uridylyltransferase region; sequence MTDPKVPRQR…LAGFNAKSRM (373 aa). The segment at 374 to 727 is uridylyl-removing; that stretch reads LKGYTVFGGK…CEFDEERGAT (354 aa). The HD domain occupies 489-611; that stretch reads VDEHTIRAIG…VQSLERLRHL (123 aa). ACT domains lie at 728-811 and 839-919; these read LVTV…LAKR and VIEV…LEPA.

Belongs to the GlnD family. Mg(2+) is required as a cofactor.

It catalyses the reaction [protein-PII]-L-tyrosine + UTP = [protein-PII]-uridylyl-L-tyrosine + diphosphate. The enzyme catalyses [protein-PII]-uridylyl-L-tyrosine + H2O = [protein-PII]-L-tyrosine + UMP + H(+). Its activity is regulated as follows. Uridylyltransferase (UTase) activity is inhibited by glutamine, while glutamine activates uridylyl-removing (UR) activity. Its function is as follows. Modifies, by uridylylation and deuridylylation, the PII regulatory proteins (GlnB and homologs), in response to the nitrogen status of the cell that GlnD senses through the glutamine level. Under low glutamine levels, catalyzes the conversion of the PII proteins and UTP to PII-UMP and PPi, while under higher glutamine levels, GlnD hydrolyzes PII-UMP to PII and UMP (deuridylylation). Thus, controls uridylylation state and activity of the PII proteins, and plays an important role in the regulation of nitrogen assimilation and metabolism. The protein is Bifunctional uridylyltransferase/uridylyl-removing enzyme of Erythrobacter litoralis (strain HTCC2594).